The primary structure comprises 378 residues: Putative odorant receptor 71a (378 aa).

Residues 1 to 37 (MDYDRIRPVRFLTGVLKWWRLWPRKESVSTPDWTNWQ) are Cytoplasmic-facing. Residues 38–58 (AYALHVPFTFLFVLLLWLEAI) traverse the membrane as a helical segment. Residues 59–66 (KSRDIQHT) lie on the Extracellular side of the membrane. The chain crosses the membrane as a helical span at residues 67–87 (ADVLLICLTTTALGGKVINIW). At 88–127 (KYAHVAQGILSEWSTWDLFELRSKQEVDMWRFEHRRFNRV) the chain is on the cytoplasmic side. The chain crosses the membrane as a helical span at residues 128-148 (FMFYCLCSAGVIPFIVIQPLF). Topologically, residues 149 to 166 (DIPNRLPFWMWTPFDWQQ) are extracellular. The chain crosses the membrane as a helical span at residues 167 to 187 (PVLFWYAFIYQATTIPIACAC). At 188-255 (NVTMDAVNWY…IFISKSTFTQ (68 aa)) the chain is on the cytoplasmic side. A helical transmembrane segment spans residues 256–276 (ILVSSLIICFTIYSMQMSPVL). Topologically, residues 277 to 280 (QDLP) are extracellular. Residues 281–301 (GFAAMMQYLVAMIMQVMLPTI) traverse the membrane as a helical segment. The Cytoplasmic segment spans residues 302–343 (YGNAVIDSANMLTDSMYNSDWPDMNCRMRRLVLMFMVYLNRP). Residues 344-364 (VTLKAGGFFHIGLPLFTKTMN) traverse the membrane as a helical segment. At 365-378 (QAYSLLALLLNMNQ) the chain is on the extracellular side.

It belongs to the insect chemoreceptor superfamily. Heteromeric odorant receptor channel (TC 1.A.69) family. Or2a subfamily. Interacts with Orco. Complexes exist early in the endomembrane system in olfactory sensory neurons (OSNs), coupling these complexes to the conserved ciliary trafficking pathway. In terms of tissue distribution, expressed in olfactory sensory neurons in the maxillary palp.

The protein resides in the cell membrane. Odorant receptor which mediates acceptance or avoidance behavior, depending on its substrates. The odorant receptor repertoire encodes a large collection of odor stimuli that vary widely in identity, intensity, and duration. May form a complex with Orco to form odorant-sensing units, providing sensitive and prolonged odorant signaling and calcium permeability. In Drosophila melanogaster (Fruit fly), this protein is Putative odorant receptor 71a (Or71a).